We begin with the raw amino-acid sequence, 451 residues long: Protein SAR DEFICIENT 1 (451 aa).

The segment at 149-270 (DKWTSDEFES…AFHKKLSSRH (122 aa)) is DNA-binding.

This sequence belongs to the plant ACBP60 protein family. As to quaternary structure, (Microbial infection) Interacts with V.dahliae SCP41.

Its subcellular location is the nucleus. Functionally, transcription activator that binds DNA in a sequence-specific manner, 5'-GAAATTTTGG-3', to promote the expression of target genes. Recruited to the promoter of ICS1 and other defense-related genes (e.g. PR1 and SID2) in response to both biotic (e.g. Pseudomonas syringae pv. maculicola ES4326) and abiotic stresses (e.g. UV-B), thus triggering slow defense responses by stimulating salicylic acid (SA) biosynthesis. Required for basal and systemic acquired resistance to P.syringae pv. maculicola and Hyaloperonospora arabidopsidis. The polypeptide is Protein SAR DEFICIENT 1 (Arabidopsis thaliana (Mouse-ear cress)).